Here is a 116-residue protein sequence, read N- to C-terminus: Nucleoid-associated protein EUBELI_02017 (116 aa).

Gly residues predominate over residues 1–12; it reads MAKRGGFPGGMP. Residues 1 to 42 are disordered; that stretch reads MAKRGGFPGGMPGNMNNLMKQAQRMQRQMEEQQAELENKEFS. Low complexity predominate over residues 13 to 26; that stretch reads GNMNNLMKQAQRMQ.

This sequence belongs to the YbaB/EbfC family. In terms of assembly, homodimer.

Its subcellular location is the cytoplasm. The protein localises to the nucleoid. Functionally, binds to DNA and alters its conformation. May be involved in regulation of gene expression, nucleoid organization and DNA protection. The protein is Nucleoid-associated protein EUBELI_02017 of Lachnospira eligens (strain ATCC 27750 / DSM 3376 / VPI C15-48 / C15-B4) (Eubacterium eligens).